The primary structure comprises 172 residues: LOB domain-containing protein 4 (172 aa).

The 102-residue stretch at 12-113 folds into the LOB domain; the sequence is SPCAACKLLR…AQLALAQAEV (102 aa). The interval 125–152 is disordered; sequence PGHGLCPDSPSSSGSPSSKQVSPQDNKG. Positions 131–147 are enriched in low complexity; it reads PDSPSSSGSPSSKQVSP.

Belongs to the LOB domain-containing protein family. As to expression, expressed in young shoots, roots, stems, leaves and flowers.

This Arabidopsis thaliana (Mouse-ear cress) protein is LOB domain-containing protein 4 (LBD4).